Reading from the N-terminus, the 566-residue chain is Sodium-dependent high-affinity dicarboxylate transporter 3 (566 aa).

Helical transmembrane passes span 55–75 (LVLV…GPEW), 92–112 (VMPL…VGVL), 123–139 (NDTN…AAAV), 162–182 (WIML…SNTA), 219–239 (MATG…TGTA), 268–288 (WIFF…MTLV), 329–349 (ILLS…GVFF), 352–372 (GAYT…VLPS), 400–420 (ETFP…AAGV), 439–459 (LPLW…TNIC), 496–516 (FAFI…SGMV), and 521–541 (MAFV…LYMN).

It belongs to the SLC13A/DASS transporter (TC 2.A.47) family. NADC subfamily. In terms of tissue distribution, nad-1 and nad-2 are coexpressed in the intestinal tract from early larvae to adults, expression is from the pharynx through to the anus. Expression level is significantly greater in the anterior half of the intestine than in the posterior half.

Its subcellular location is the membrane. In terms of biological role, high-affinity sodium-dicarboxylate cotransporter that accepts a range of tricarboxylic acid-cycle intermediates with 4-5 carbon atoms. There is no interaction with monocarboxylates. Plays a role in the regulation of life span. This chain is Sodium-dependent high-affinity dicarboxylate transporter 3 (nac-3), found in Caenorhabditis elegans.